Consider the following 123-residue polypeptide: WAP four-disulfide core domain protein 5 (123 aa).

Residues Met1–Gly24 form the signal peptide. WAP domains follow at residues Lys27–Ile74 and Leu75–Ala121. 8 disulfides stabilise this stretch: Cys34–Cys62, Cys41–Cys66, Cys49–Cys61, Cys55–Cys70, Cys81–Cys109, Cys88–Cys113, Cys96–Cys108, and Cys102–Cys117.

Its subcellular location is the secreted. In terms of biological role, putative acid-stable proteinase inhibitor. The polypeptide is WAP four-disulfide core domain protein 5 (WFDC5) (Lemur catta (Ring-tailed lemur)).